The chain runs to 135 residues: Large ribosomal subunit protein uL16c (135 aa).

The protein belongs to the universal ribosomal protein uL16 family. In terms of assembly, part of the 50S ribosomal subunit.

It localises to the plastid. It is found in the chloroplast. This Populus alba (White poplar) protein is Large ribosomal subunit protein uL16c.